We begin with the raw amino-acid sequence, 459 residues long: Cell division protein FtsZ (459 aa).

GTP is bound by residues 25 to 29 (GAGSN), 112 to 114 (GTG), E143, R147, and D191. Disordered stretches follow at residues 383–405 (DQAP…DAGE) and 427–459 (IPER…KKRD).

It belongs to the FtsZ family. Homodimer. Polymerizes to form a dynamic ring structure in a strictly GTP-dependent manner. Interacts directly with several other division proteins.

Its subcellular location is the cytoplasm. Functionally, essential cell division protein that forms a contractile ring structure (Z ring) at the future cell division site. The regulation of the ring assembly controls the timing and the location of cell division. One of the functions of the FtsZ ring is to recruit other cell division proteins to the septum to produce a new cell wall between the dividing cells. Binds GTP and shows GTPase activity. This Rickettsia bellii (strain RML369-C) protein is Cell division protein FtsZ.